Consider the following 429-residue polypeptide: Ribosomal RNA small subunit methyltransferase B (429 aa).

Residues 254–260 (CAAPGGK), D277, D303, and D322 contribute to the S-adenosyl-L-methionine site. C375 (nucleophile) is an active-site residue. Positions 397–419 (ALSETGTPDQPGQQNLPGGEEGD) are disordered. Residues 400-412 (ETGTPDQPGQQNL) are compositionally biased toward polar residues.

Belongs to the class I-like SAM-binding methyltransferase superfamily. RsmB/NOP family.

It localises to the cytoplasm. The enzyme catalyses cytidine(967) in 16S rRNA + S-adenosyl-L-methionine = 5-methylcytidine(967) in 16S rRNA + S-adenosyl-L-homocysteine + H(+). In terms of biological role, specifically methylates the cytosine at position 967 (m5C967) of 16S rRNA. The sequence is that of Ribosomal RNA small subunit methyltransferase B from Salmonella newport (strain SL254).